Consider the following 123-residue polypeptide: Large ribosomal subunit protein bL12 (123 aa).

The protein belongs to the bacterial ribosomal protein bL12 family. As to quaternary structure, homodimer. Part of the ribosomal stalk of the 50S ribosomal subunit. Forms a multimeric L10(L12)X complex, where L10 forms an elongated spine to which 2 to 4 L12 dimers bind in a sequential fashion. Binds GTP-bound translation factors.

Functionally, forms part of the ribosomal stalk which helps the ribosome interact with GTP-bound translation factors. Is thus essential for accurate translation. The sequence is that of Large ribosomal subunit protein bL12 from Bacillus licheniformis (strain ATCC 14580 / DSM 13 / JCM 2505 / CCUG 7422 / NBRC 12200 / NCIMB 9375 / NCTC 10341 / NRRL NRS-1264 / Gibson 46).